A 553-amino-acid chain; its full sequence is Probable bifunctional riboflavin biosynthesis protein RIBA 2, chloroplastic (553 aa).

A chloroplast-targeting transit peptide spans 1–56; sequence MASISPTSSSVAALRGHPVQFVKGGAVSKEAKGSISFSPVANSNNANVKFTGLRVA. The tract at residues 62–336 is DHBP synthase; it reads DGAFPGDGYS…IADLIRYRRK (275 aa). Positions 70-90 are disordered; that stretch reads YSGNDNTVLPKSTSVRGQDYP. Polar residues predominate over residues 72 to 85; the sequence is GNDNTVLPKSTSVR. Residues 160 to 161, aspartate 165, 275 to 279, and glutamate 299 contribute to the D-ribulose 5-phosphate site; these read RE and RAGHT. Mg(2+) is bound at residue glutamate 161. Position 278 (histidine 278) interacts with Mg(2+). Residues 337–553 are GTP cyclohydrolase II; that stretch reads RDRLVERSSV…TGSNGAKGEH (217 aa). Residue 387 to 391 participates in GTP binding; it reads RVHSE. Cysteine 392, cysteine 403, and cysteine 405 together coordinate Zn(2+). GTP-binding positions include glutamine 408, 431–433, and threonine 453; that span reads EGR. Aspartate 465 serves as the catalytic Proton acceptor; for GTP cyclohydrolase activity. Residue arginine 467 is the Nucleophile; for GTP cyclohydrolase activity of the active site. GTP contacts are provided by threonine 488 and lysine 493.

The protein in the N-terminal section; belongs to the DHBP synthase family. This sequence in the C-terminal section; belongs to the GTP cyclohydrolase II family. Mg(2+) serves as cofactor. Requires Mn(2+) as cofactor. Zn(2+) is required as a cofactor.

It is found in the plastid. The protein localises to the chloroplast. It carries out the reaction D-ribulose 5-phosphate = (2S)-2-hydroxy-3-oxobutyl phosphate + formate + H(+). It catalyses the reaction GTP + 4 H2O = 2,5-diamino-6-hydroxy-4-(5-phosphoribosylamino)-pyrimidine + formate + 2 phosphate + 3 H(+). It functions in the pathway cofactor biosynthesis; riboflavin biosynthesis; 2-hydroxy-3-oxobutyl phosphate from D-ribulose 5-phosphate: step 1/1. Its pathway is cofactor biosynthesis; riboflavin biosynthesis; 5-amino-6-(D-ribitylamino)uracil from GTP: step 1/4. Its function is as follows. Involved in riboflavin biosynthesis. Catalyzes both the conversion of D-ribulose 5-phosphate to formate and 3,4-dihydroxy-2-butanone 4-phosphate and the conversion of GTP to 2,5-diamino-6-ribosylamino-4(3H)-pyrimidinone 5'-phosphate (DARP), formate and pyrophosphate. The chain is Probable bifunctional riboflavin biosynthesis protein RIBA 2, chloroplastic (RIBA2) from Oryza sativa subsp. japonica (Rice).